Consider the following 203-residue polypeptide: Ribonuclease HII (203 aa).

Positions 16 to 203 (ENIACCDEVG…HRKSFLNKIL (188 aa)) constitute an RNase H type-2 domain. Residues D22, E23, and D120 each coordinate a divalent metal cation.

This sequence belongs to the RNase HII family. It depends on Mn(2+) as a cofactor. Requires Mg(2+) as cofactor.

It is found in the cytoplasm. The enzyme catalyses Endonucleolytic cleavage to 5'-phosphomonoester.. In terms of biological role, endonuclease that specifically degrades the RNA of RNA-DNA hybrids. This is Ribonuclease HII from Alkaliphilus oremlandii (strain OhILAs) (Clostridium oremlandii (strain OhILAs)).